The chain runs to 171 residues: Dual specificity protein phosphatase OPG106 (171 aa).

The 149-residue stretch at 23–171 (SPTIMTRVTN…IIEKYVIDKN (149 aa)) folds into the Tyrosine-protein phosphatase domain. The Phosphocysteine intermediate role is filled by C110.

Belongs to the protein-tyrosine phosphatase family. Non-receptor class dual specificity subfamily. In terms of assembly, homodimer.

Its subcellular location is the virion. It localises to the host cytoplasm. The enzyme catalyses O-phospho-L-tyrosyl-[protein] + H2O = L-tyrosyl-[protein] + phosphate. The catalysed reaction is O-phospho-L-seryl-[protein] + H2O = L-seryl-[protein] + phosphate. In terms of biological role, serine/tyrosine phosphatase which down-regulates cellular antiviral response by dephosphorylating activated host STAT1 and blocking interferon (IFN)-stimulated innate immune responses. Dephosphorylates the OPG144 protein. In Homo sapiens (Human), this protein is Dual specificity protein phosphatase OPG106 (OPG106).